Here is a 206-residue protein sequence, read N- to C-terminus: Large ribosomal subunit protein uL4 (206 aa).

The tract at residues 42–94 (RRQQGSHKAQGRGDVSRTGSKMYKQKGTGRARHHSARAPQFRGGGQAHGPVVR) is disordered. Residues 64-77 (YKQKGTGRARHHSA) are compositionally biased toward basic residues.

It belongs to the universal ribosomal protein uL4 family. Part of the 50S ribosomal subunit.

Its function is as follows. One of the primary rRNA binding proteins, this protein initially binds near the 5'-end of the 23S rRNA. It is important during the early stages of 50S assembly. It makes multiple contacts with different domains of the 23S rRNA in the assembled 50S subunit and ribosome. Functionally, forms part of the polypeptide exit tunnel. The polypeptide is Large ribosomal subunit protein uL4 (Brucella abortus biovar 1 (strain 9-941)).